The chain runs to 364 residues: MEAVLVAMSVPATTEDDGFSLITDKLSYNLTPTSDVEIVTSDNRRIPAHSGVLASASPVLMNIMKKPMRRYRGCGSKRVIKILGVPCDAVSVFIKFLYSSSLTEDEMERYGIHLLALSHVYMVTQLKQRCSKGVVQRLTTENVVDVLQLARLCDAPDVCLRSMRLIHSQFKTVEQTEGWKFIQEHDPFLELDILQFIDDAESRKKRRRRHRKEQDLYMQLSEAMECIEHICTQGCTLVGPSNVVDNNKKSMTAEKSEPCKAFSTCYGLQLLIRHFAVCKRRNNDKGCLRCKRMLQLFRLHSLICDQPDSCRVPLCRQFRKRGEQDKKMGEDTKWKLLVTRVVSAKAMTSLCQSKKNKCEQAQGV.

One can recognise a BTB domain in the interval 34–106 (SDVEIVTSDN…LYSSSLTEDE (73 aa)). The short motif at 203-212 (RKKRRRRHRK) is the Nuclear localization signal element. The TAZ-type zinc finger occupies 215-316 (DLYMQLSEAM…PDSCRVPLCR (102 aa)). A caM-binding region spans residues 327–350 (KMGEDTKWKLLVTRVVSAKAMTSL).

Interacts with CUL3A. Interacts with GTE11/BET10 through the BTB domain. As to expression, preferentially expressed in young leaves and roots.

The protein resides in the nucleus. Its subcellular location is the cytoplasm. The protein operates within protein modification; protein ubiquitination. Functionally, may act as a substrate-specific adapter of an E3 ubiquitin-protein ligase complex (CUL3-RBX1-BTB) which mediates the ubiquitination and subsequent proteasomal degradation of target proteins. Plays a key role as a component of the TAC1-mediated telomerase activation pathway certainly by targeting a telomerase repressor to degradation. Seems to occupy an integral position in a complex signaling network that perceives, integrates, and responds to multiple, and sometimes competing, signals. Enhances responses to auxin in postgermination and vegetative development. Also negatively regulates ABA- and sugar-mediated inhibition of the germination. Essential for female and male gametophyte development. This is BTB/POZ and TAZ domain-containing protein 2 (BT2) from Arabidopsis thaliana (Mouse-ear cress).